A 452-amino-acid chain; its full sequence is Protein CSN12 homolog (452 aa).

The 198-residue stretch at 249-446 folds into the PCI domain; sequence VTFKYYEGVL…GFVVLSKSGA (198 aa).

It belongs to the CSN12 family.

The sequence is that of Protein CSN12 homolog (csn-8) from Neurospora crassa (strain ATCC 24698 / 74-OR23-1A / CBS 708.71 / DSM 1257 / FGSC 987).